A 45-amino-acid polypeptide reads, in one-letter code: Photosystem II reaction center protein K (45 aa).

Positions 1–8 are excised as a propeptide; it reads MDFALLLA. A helical transmembrane segment spans residues 24 to 44; that stretch reads LPLIPLFFLLLAFVWQAAVGF.

Belongs to the PsbK family. PSII is composed of 1 copy each of membrane proteins PsbA, PsbB, PsbC, PsbD, PsbE, PsbF, PsbH, PsbI, PsbJ, PsbK, PsbL, PsbM, PsbT, PsbX, PsbY, PsbZ, Psb30/Ycf12, peripheral proteins PsbO, CyanoQ (PsbQ), PsbU, PsbV and a large number of cofactors. It forms dimeric complexes.

It is found in the cellular thylakoid membrane. Functionally, one of the components of the core complex of photosystem II (PSII). PSII is a light-driven water:plastoquinone oxidoreductase that uses light energy to abstract electrons from H(2)O, generating O(2) and a proton gradient subsequently used for ATP formation. It consists of a core antenna complex that captures photons, and an electron transfer chain that converts photonic excitation into a charge separation. This chain is Photosystem II reaction center protein K, found in Gloeothece citriformis (strain PCC 7424) (Cyanothece sp. (strain PCC 7424)).